The following is a 456-amino-acid chain: MLPSQSPAIFTVSRLNQTVRLLLEHEMGQVWISGEISNFTQPASGHWYFTLKDDTAQVRCAMFRNSNRRVTFRPQHGQQVLVRANITLYEPRGDYQIIVESMQPAGEGLLQQKYEQLKAKLQAEGLFDQQYKKPLPSPAHCVGVITSKTGAALHDILHVLKRRDPSLPVIIYPTSVQGDDAPGQIVRAIELANQRNECDVLIVGRGGGSLEDLWSFNDERVARAIFASRIPVVSAVGHETDVTIADFVADLRAPTPSAAAEVVSRNQQELLRQVQSSRQRLEMAMDYYLANRTRRFTQIHHRLQQQHPQLRLARQQTMLERLQKRMSFALENQLKRAGQQQQRLTQRLNQQNPQPKIHRTQTRIQQLEYRLAEILRAQLSATRERFGNAVTHLEAVSPLSTLARGYSVTTATDGNVLKKVKQVKAGEMLTTRLEDGWIESEVKNIQPVKKSRKKVH.

The protein belongs to the XseA family. As to quaternary structure, heterooligomer composed of large and small subunits.

It is found in the cytoplasm. The enzyme catalyses Exonucleolytic cleavage in either 5'- to 3'- or 3'- to 5'-direction to yield nucleoside 5'-phosphates.. Bidirectionally degrades single-stranded DNA into large acid-insoluble oligonucleotides, which are then degraded further into small acid-soluble oligonucleotides. This chain is Exodeoxyribonuclease 7 large subunit, found in Shigella flexneri serotype 5b (strain 8401).